The sequence spans 433 residues: Chaperone SurA (433 aa).

An N-terminal signal peptide occupies residues 1-24; that stretch reads MKYRIKALLLASSLIITTITSVQA. 2 PpiC domains span residues 175 to 276 and 285 to 384; these read NVEY…KVLD and VEEV…KLED.

The protein localises to the periplasm. The enzyme catalyses [protein]-peptidylproline (omega=180) = [protein]-peptidylproline (omega=0). Chaperone involved in the correct folding and assembly of outer membrane proteins. Recognizes specific patterns of aromatic residues and the orientation of their side chains, which are found more frequently in integral outer membrane proteins. May act in both early periplasmic and late outer membrane-associated steps of protein maturation. The protein is Chaperone SurA of Colwellia psychrerythraea (strain 34H / ATCC BAA-681) (Vibrio psychroerythus).